The primary structure comprises 198 residues: FMN-dependent NADH:quinone oxidoreductase (198 aa).

Residues S10, 16–18 (SQS), 94–97 (MYNF), and 138–141 (TRGG) each bind FMN.

The protein belongs to the azoreductase type 1 family. In terms of assembly, homodimer. The cofactor is FMN.

The catalysed reaction is 2 a quinone + NADH + H(+) = 2 a 1,4-benzosemiquinone + NAD(+). It carries out the reaction N,N-dimethyl-1,4-phenylenediamine + anthranilate + 2 NAD(+) = 2-(4-dimethylaminophenyl)diazenylbenzoate + 2 NADH + 2 H(+). Quinone reductase that provides resistance to thiol-specific stress caused by electrophilic quinones. Its function is as follows. Also exhibits azoreductase activity. Catalyzes the reductive cleavage of the azo bond in aromatic azo compounds to the corresponding amines. The chain is FMN-dependent NADH:quinone oxidoreductase from Shewanella baltica (strain OS195).